The sequence spans 90 residues: Small ribosomal subunit protein uS15 (90 aa).

The protein belongs to the universal ribosomal protein uS15 family. As to quaternary structure, part of the 30S ribosomal subunit. Forms a bridge to the 50S subunit in the 70S ribosome, contacting the 23S rRNA.

Functionally, one of the primary rRNA binding proteins, it binds directly to 16S rRNA where it helps nucleate assembly of the platform of the 30S subunit by binding and bridging several RNA helices of the 16S rRNA. In terms of biological role, forms an intersubunit bridge (bridge B4) with the 23S rRNA of the 50S subunit in the ribosome. This Herpetosiphon aurantiacus (strain ATCC 23779 / DSM 785 / 114-95) protein is Small ribosomal subunit protein uS15.